The chain runs to 347 residues: Endo-1,4-beta-xylanase 3 (347 aa).

A signal peptide spans 1–16; it reads MKANVILCLLAPLVAA. Positions 17-45 are excised as a propeptide; that stretch reads LPTETIHLDPELAALRANLTERTADLWDR. Q46 is modified (pyrrolidone carboxylic acid). One can recognise a GH10 domain in the interval 46 to 345; the sequence is QASQSIDQLI…KPAYNSIVGI (300 aa). E176 serves as the catalytic Proton donor. E282 functions as the Nucleophile in the catalytic mechanism. A disulfide bridge connects residues C300 and C306.

This sequence belongs to the glycosyl hydrolase 10 (cellulase F) family. Monomer. Post-translationally, not glycosylated.

Its subcellular location is the secreted. It carries out the reaction Endohydrolysis of (1-&gt;4)-beta-D-xylosidic linkages in xylans.. Its pathway is glycan degradation; xylan degradation. Functionally, glycoside hydrolase involved in the hydrolysis of xylan, a major plant cell wall hemicellulose made up of 1,4-beta-linked D-xylopyranose residues. Catalyzes the endohydrolysis of the main-chain 1,4-beta-glycosidic bonds connecting the xylose subunits yielding various xylooligosaccharides and xylose. Produces xylobiose and xylotriose as the main degradation products. The sequence is that of Endo-1,4-beta-xylanase 3 (xyn3) from Hypocrea jecorina (strain QM6a) (Trichoderma reesei).